The following is a 169-amino-acid chain: 4-hydroxylaminobenzoate lyase (169 aa).

This sequence belongs to the PnbB family.

The enzyme catalyses 4-hydroxylaminobenzoate + H2O + H(+) = 3,4-dihydroxybenzoate + NH4(+). Lyase involved in the degradation of nitroaromatic compounds. Catalyzes the conversion of 4-hydroxylaminobenzoate to 3,4-dihydroxybenzoate (protocatechuate). The protein is 4-hydroxylaminobenzoate lyase of Nocardioides sp. (strain LMS-CY).